Consider the following 376-residue polypeptide: Alcohol dehydrogenase 1 (376 aa).

At Ser-2 the chain carries N-acetylserine. Residues Cys-47, His-68, Cys-98, Cys-101, Cys-104, Cys-112, and Cys-176 each coordinate Zn(2+). Residues 201–206 (GLGGVG), Asp-225, Lys-230, 294–296 (VGV), and Arg-371 each bind NAD(+).

This sequence belongs to the zinc-containing alcohol dehydrogenase family. Class-I subfamily. In terms of assembly, homodimer. Zn(2+) is required as a cofactor.

Its subcellular location is the cytoplasm. It catalyses the reaction a primary alcohol + NAD(+) = an aldehyde + NADH + H(+). It carries out the reaction a secondary alcohol + NAD(+) = a ketone + NADH + H(+). The protein is Alcohol dehydrogenase 1 (ADH1) of Gallus gallus (Chicken).